The primary structure comprises 246 residues: Octanoyltransferase (246 aa).

The 198-residue stretch at 30 to 227 folds into the BPL/LPL catalytic domain; that stretch reads GRIGNTLLLL…QFGRVFGHQV (198 aa). Residues 75–82, 155–157, and 168–170 contribute to the substrate site; these read RGGDVTYH, AIG, and GFA. Catalysis depends on cysteine 186, which acts as the Acyl-thioester intermediate.

This sequence belongs to the LipB family.

It is found in the cytoplasm. It carries out the reaction octanoyl-[ACP] + L-lysyl-[protein] = N(6)-octanoyl-L-lysyl-[protein] + holo-[ACP] + H(+). The protein operates within protein modification; protein lipoylation via endogenous pathway; protein N(6)-(lipoyl)lysine from octanoyl-[acyl-carrier-protein]: step 1/2. Its function is as follows. Catalyzes the transfer of endogenously produced octanoic acid from octanoyl-acyl-carrier-protein onto the lipoyl domains of lipoate-dependent enzymes. Lipoyl-ACP can also act as a substrate although octanoyl-ACP is likely to be the physiological substrate. This Acidobacterium capsulatum (strain ATCC 51196 / DSM 11244 / BCRC 80197 / JCM 7670 / NBRC 15755 / NCIMB 13165 / 161) protein is Octanoyltransferase.